The following is a 224-amino-acid chain: PKHD-type hydroxylase CYB_2270 (224 aa).

The Fe2OG dioxygenase domain occupies 78–176 (LIHSILISCY…RYAAVSWVQS (99 aa)). His96, Asp98, and His157 together coordinate Fe cation. Arg167 is a binding site for 2-oxoglutarate.

The cofactor is Fe(2+). L-ascorbate serves as cofactor.

This Synechococcus sp. (strain JA-2-3B'a(2-13)) (Cyanobacteria bacterium Yellowstone B-Prime) protein is PKHD-type hydroxylase CYB_2270.